The sequence spans 336 residues: MGGGLVLPTRDPPKEQDTSETATNIPKLLKSIPGVKLGQQIRIGYKPGPETAKAFPEFDIKEVSNGLYELSRKSYLGDTKTCCINPSLSYYWEDSKNKIFDEYATGRSLKTCDPLTKTISGSTLCDNILTSLCLDEKSGVDRTMCNEWMGYALNRPDLSIPKSINDRYTKLCSKGANNIVCEDWLHHLRIIGGKENDEVIDNVLMQQTPEFKEKYMKCSFPSHNTVFLAYRVIEPRECWDQECITSNVHFLLSKNYHNLTLCHIYRCNISINNLLIDGKSSVKISCHDENISNKDKPKARNKAKFIDDILGSSFNINFGFFFVIFIMIALILIVLL.

Residues methionine 1 to alanine 22 are disordered.

Belongs to the poxviruses A16/G9/J5 family.

This chain is Protein FPV127, found in Vertebrata (FPV).